Consider the following 723-residue polypeptide: Transcription factor E2F7 (723 aa).

Residues 121–146 (AEEEEEEELDDSCQYEALDESERRPS) are disordered. Over residues 122–139 (EEEEEEELDDSCQYEALD) the composition is skewed to acidic residues. 2 consecutive DNA-binding regions follow at residues 147–216 (RKQK…VWHG) and 264–349 (RKDK…KWIG). Composition is skewed to polar residues over residues 356-370 (SSNS…SNSG) and 395-405 (LISSAPSTPHR). 5 disordered regions span residues 356 to 379 (SSNS…KMAR), 395 to 417 (LISS…YSRK), 489 to 546 (SLRK…ASFG), 650 to 689 (EHHG…SKSF), and 702 to 723 (QSAA…TAAN). Residues 494-503 (ERSEEDDHQT) are compositionally biased toward basic and acidic residues. A compositionally biased stretch (low complexity) spans 520 to 535 (SESLSSSTRRSPVCSP).

This sequence belongs to the E2F/DP family. In terms of assembly, homodimer and heterodimer: mainly forms homodimers and, to a lesser extent, heterodimers with e2f8.

The protein localises to the nucleus. Atypical E2F transcription factor that participates in various processes such as angiogenesis and polyploidization of specialized cells. Mainly acts as a transcription repressor that binds DNA independently of DP proteins and specifically recognizes the E2 recognition site 5'-TTTC[CG]CGC-3'. Directly represses transcription of classical E2F transcription factors such as e2f1. Acts as a regulator of S-phase by recognizing and binding the E2-related site 5'-TTCCCGCC-3' and mediating repression of G1/S-regulated genes. Acts as a promoter of sprouting angiogenesis, possibly by acting as a transcription activator and promoting expression of vegfa. The polypeptide is Transcription factor E2F7 (e2f7) (Danio rerio (Zebrafish)).